The following is a 176-amino-acid chain: Ribosome rescue factor SmrB (176 aa).

A Smr domain is found at 93–168 (LDLHGYRQSE…GDAALLVLID (76 aa)).

The protein belongs to the SmrB family. In terms of assembly, associates with collided ribosomes, but not with correctly translating polysomes.

Functionally, acts as a ribosome collision sensor. Detects stalled/collided disomes (pairs of ribosomes where the leading ribosome is stalled and a second ribosome has collided with it) and endonucleolytically cleaves mRNA at the 5' boundary of the stalled ribosome. Stalled/collided disomes form a new interface (primarily via the 30S subunits) that binds SmrB. Cleaved mRNA becomes available for tmRNA ligation, leading to ribosomal subunit dissociation and rescue of stalled ribosomes. This is Ribosome rescue factor SmrB from Shewanella sp. (strain W3-18-1).